A 254-amino-acid chain; its full sequence is Bidirectional sugar transporter SWEET6b (254 aa).

At 1 to 9 (MISPDAARN) the chain is on the extracellular side. The chain crosses the membrane as a helical span at residues 10-30 (VVGIIGNVISFGLFLAPVPTF). Positions 10–98 (VVGIIGNVIS…IFFLYSPNKK (89 aa)) constitute a MtN3/slv 1 domain. The Cytoplasmic portion of the chain corresponds to 31 to 45 (WRICKRKDVEEFKAD). The helical transmembrane segment at 46–66 (PYLATLLNCMLWVFYGIPIVH) threads the bilayer. At 67–69 (PNS) the chain is on the extracellular side. The helical transmembrane segment at 70–90 (ILVVTINGIGLVVEGTYLFIF) threads the bilayer. The Cytoplasmic portion of the chain corresponds to 91–101 (FLYSPNKKRLR). A helical membrane pass occupies residues 102–122 (MLAVLGVELVFMLAVILGVLL). Topologically, residues 123–131 (GAHTHKKRS) are extracellular. Residues 132 to 152 (MIVGILCVFFGSIMYFSPLTI) form a helical membrane-spanning segment. A MtN3/slv 2 domain is found at 133-216 (IVGILCVFFG…LILYACYYRT (84 aa)). Residues 153-165 (MGKVIKTKSVEYM) are Cytoplasmic-facing. Residues 166–186 (PFFLSLVCFLNGVCWTAYALI) form a helical membrane-spanning segment. The Extracellular segment spans residues 187-189 (RFD). Residues 190–210 (IYVTIPNSLGAIFGAIQLILY) form a helical membrane-spanning segment. At 211–254 (ACYYRTTPKKTKAAKDVEMPSVISGPGAAATASGGSVVSVTVER) the chain is on the cytoplasmic side.

It belongs to the SWEET sugar transporter family. Forms homooligomers and/or heterooligomers.

The protein resides in the cell membrane. Functionally, mediates both low-affinity uptake and efflux of sugar across the plasma membrane. This Oryza sativa subsp. indica (Rice) protein is Bidirectional sugar transporter SWEET6b (SWEET6B).